Here is a 394-residue protein sequence, read N- to C-terminus: Tryptophan synthase beta chain (394 aa).

Residue Lys84 is modified to N6-(pyridoxal phosphate)lysine.

It belongs to the TrpB family. Tetramer of two alpha and two beta chains. It depends on pyridoxal 5'-phosphate as a cofactor.

The catalysed reaction is (1S,2R)-1-C-(indol-3-yl)glycerol 3-phosphate + L-serine = D-glyceraldehyde 3-phosphate + L-tryptophan + H2O. Its pathway is amino-acid biosynthesis; L-tryptophan biosynthesis; L-tryptophan from chorismate: step 5/5. In terms of biological role, the beta subunit is responsible for the synthesis of L-tryptophan from indole and L-serine. The polypeptide is Tryptophan synthase beta chain (Clostridium acetobutylicum (strain ATCC 824 / DSM 792 / JCM 1419 / IAM 19013 / LMG 5710 / NBRC 13948 / NRRL B-527 / VKM B-1787 / 2291 / W)).